The chain runs to 893 residues: Phosphatidate phosphatase LPIN2 (893 aa).

Residues 1–108 (MNYVGQLAGQ…LPAYLATSPI (108 aa)) form an N-LIP region. Phosphoserine is present on Ser106. Residues 122 to 216 (LVKSSGNERP…EDYKEPSLFH (95 aa)) form a disordered region. A compositionally biased stretch (polar residues) spans 123-151 (VKSSGNERPAQSSDVSHTLESEAVFTQSS). A compositionally biased stretch (basic residues) spans 152–162 (VKKKKRRRKKC). Residues 153-158 (KKKKRR) carry the Nuclear localization signal motif. Phosphoserine occurs at positions 174, 186, and 187. The span at 204–213 (LKEEDYKEPS) shows a compositional bias: basic and acidic residues. Phosphoserine occurs at positions 243 and 303. Disordered stretches follow at residues 357–400 (LLDA…PDDI) and 417–456 (FPKS…TECL). The segment covering 360–371 (ADPVPSPSAEAP) has biased composition (low complexity). Basic residues predominate over residues 384–393 (KKKGVHKRSQ). Over residues 423-445 (DPGSRQWPESDTFSGSQSPQSVG) the composition is skewed to polar residues. Ser563 bears the Phosphoserine mark. The interval 568-611 (LPETKEGKSEVPPANDLPSNAEEPTSARPAENDTSSDEGSQELE) is disordered. Residues 601-611 (TSSDEGSQELE) show a composition bias toward acidic residues. Residues 632-834 (YKKSLRLSSD…RIFTVNPKGE (203 aa)) form a C-LIP region. The DXDXT motif signature appears at 686 to 690 (DIDGT). Positions 697-701 (LGQIL) match the LXXIL motif motif.

Belongs to the lipin family. Requires Mg(2+) as cofactor. Expressed at high level in liver and to some extend in lung, kidney, placenta, spleen, thymus, lymph node, prostate, testes, small intestine, and colon. Expressed also in circulating red blood cells and site of lymphopoiesis.

The protein localises to the nucleus. It localises to the cytoplasm. The protein resides in the cytosol. Its subcellular location is the endoplasmic reticulum membrane. The catalysed reaction is a 1,2-diacyl-sn-glycero-3-phosphate + H2O = a 1,2-diacyl-sn-glycerol + phosphate. Inhibited by N-ethylmaleimide. Functionally, acts as a magnesium-dependent phosphatidate phosphatase enzyme which catalyzes the conversion of phosphatidic acid to diacylglycerol during triglyceride, phosphatidylcholine and phosphatidylethanolamine biosynthesis in the endoplasmic reticulum membrane. Plays important roles in controlling the metabolism of fatty acids at different levels. Also acts as a nuclear transcriptional coactivator for PPARGC1A to modulate lipid metabolism. This is Phosphatidate phosphatase LPIN2 from Mus musculus (Mouse).